The chain runs to 1063 residues: JmjC domain-containing histone demethylation protein 1 (1063 aa).

The region spanning 86–266 is the JmjC domain; the sequence is LYNVLSLEYS…TQLRVYQVEN (181 aa). Threonine 160 is a substrate binding site. Fe cation is bound by residues histidine 163 and aspartate 165. Lysine 180 is a binding site for substrate. A Fe cation-binding site is contributed by histidine 234. Acidic residues predominate over residues 379–389; that stretch reads GLEEEAEDEDV. Disordered stretches follow at residues 379 to 400, 554 to 750, and 776 to 1040; these read GLEE…AEER, ESDE…NPYN, and VELH…KRAK. Basic and acidic residues predominate over residues 390-400; it reads KPETKKEAEER. Composition is skewed to acidic residues over residues 594-605 and 613-631; these read PEYDEDMEEYDP and ELEE…EEEY. Over residues 636–646 the composition is skewed to low complexity; it reads TRRSSTRGSAS. Composition is skewed to basic and acidic residues over residues 647-665, 674-712, 776-806, 813-835, and 892-902; these read TKEE…PKKE, EKSS…ELRA, VELH…HEDS, PYDR…DSHR, and EPRRSNDRRTS. Over residues 926–937 the composition is skewed to low complexity; it reads AEAASASSSRHS. 2 stretches are compositionally biased toward polar residues: residues 950–963 and 973–982; these read LNSS…TPMY and WLPNTSNVTR. A compositionally biased stretch (pro residues) spans 1005-1016; that stretch reads PPFPRSITPPPV. Over residues 1020-1030 the composition is skewed to polar residues; the sequence is ELKSQSNGRKS. Residues 1031–1040 are compositionally biased toward basic and acidic residues; the sequence is NYSEDGKRAK.

The protein belongs to the JHDM1 histone demethylase family. Fe(2+) is required as a cofactor.

The protein resides in the nucleus. It carries out the reaction N(6),N(6)-dimethyl-L-lysyl(36)-[histone H3] + 2 2-oxoglutarate + 2 O2 = L-lysyl(36)-[histone H3] + 2 formaldehyde + 2 succinate + 2 CO2. Its function is as follows. Histone demethylase that specifically demethylates 'Lys-36' of histone H3, thereby playing a central role in histone code. This chain is JmjC domain-containing histone demethylation protein 1 (jhdm-1), found in Caenorhabditis briggsae.